A 345-amino-acid polypeptide reads, in one-letter code: Protein arginine N-methyltransferase 1 (345 aa).

One can recognise an SAM-dependent MTase PRMT-type domain in the interval 24–345; it reads ADYYFDSYSH…VKNTQQYRMR (322 aa). The S-adenosyl-L-methionine site is built by histidine 37, arginine 46, glycine 70, glutamate 92, and glutamate 121. Active-site residues include glutamate 136 and glutamate 145.

This sequence belongs to the class I-like SAM-binding methyltransferase superfamily. Protein arginine N-methyltransferase family. Phosphorylated during flagellum resorption.

Its subcellular location is the nucleus. The protein resides in the cell projection. It localises to the cilium. The protein localises to the flagellum. The catalysed reaction is L-arginyl-[protein] + S-adenosyl-L-methionine = N(omega)-methyl-L-arginyl-[protein] + S-adenosyl-L-homocysteine + H(+). It carries out the reaction L-arginyl-[protein] + 2 S-adenosyl-L-methionine = N(omega),N(omega)-dimethyl-L-arginyl-[protein] + 2 S-adenosyl-L-homocysteine + 2 H(+). In terms of biological role, arginine methyltransferase that methylates (mono and asymmetric dimethylation) the guanidino nitrogens of arginyl residues present in target proteins. Mediates asymmetric dimethylation of components of the axoneme during flagellum resorption, such as CCDC40/FAP172, CCDC65/FAP250, RSP1, RSP2, RPS5, RSP6, and tektin. The chain is Protein arginine N-methyltransferase 1 (PRMT1) from Chlamydomonas reinhardtii (Chlamydomonas smithii).